We begin with the raw amino-acid sequence, 512 residues long: Probable DNA ligase (512 aa).

Asp-217 provides a ligand contact to ATP. Lys-219 functions as the N6-AMP-lysine intermediate in the catalytic mechanism. Arg-224, Arg-239, Glu-268, Phe-306, Arg-377, and Lys-383 together coordinate ATP.

This sequence belongs to the ATP-dependent DNA ligase family. Requires Mg(2+) as cofactor.

The catalysed reaction is ATP + (deoxyribonucleotide)n-3'-hydroxyl + 5'-phospho-(deoxyribonucleotide)m = (deoxyribonucleotide)n+m + AMP + diphosphate.. In terms of biological role, DNA ligase that seals nicks in double-stranded DNA during DNA replication, DNA recombination and DNA repair. The chain is Probable DNA ligase from Beutenbergia cavernae (strain ATCC BAA-8 / DSM 12333 / CCUG 43141 / JCM 11478 / NBRC 16432 / NCIMB 13614 / HKI 0122).